The primary structure comprises 316 residues: Serpentine receptor class gamma-8 (316 aa).

Transmembrane regions (helical) follow at residues 28 to 48, 60 to 80, 106 to 126, 147 to 167, 186 to 206, 235 to 255, and 267 to 287; these read FVQVAYLAPAVFLYSRILYVV, PFFMVYSMVGLILVLLDIFIT, LYYPLLNYLHCAQPFIQIFLT, FSRILILNLIAPFFFIWNTII, IIPWASMSLFLFIIRSAVVMI, ACAANSICFLVPAVFEAMKVL, and LVQPFAWDVLNVGSPLVMIFA.

It belongs to the nematode receptor-like protein srg family.

It is found in the membrane. The sequence is that of Serpentine receptor class gamma-8 (srg-8) from Caenorhabditis elegans.